A 190-amino-acid chain; its full sequence is Adenylate kinase (190 aa).

Glycine 11–threonine 16 contacts ATP. The segment at serine 31 to valine 60 is NMP. AMP contacts are provided by residues threonine 32, arginine 37, glutamine 58–valine 60, glycine 86–arginine 89, and glutamine 93. An LID region spans residues glutamate 127 to aspartate 137. Residue arginine 128 coordinates ATP. AMP is bound by residues arginine 134 and arginine 145. Glycine 173 serves as a coordination point for ATP.

The protein belongs to the adenylate kinase family. As to quaternary structure, monomer.

The protein resides in the cytoplasm. The enzyme catalyses AMP + ATP = 2 ADP. The protein operates within purine metabolism; AMP biosynthesis via salvage pathway; AMP from ADP: step 1/1. Functionally, catalyzes the reversible transfer of the terminal phosphate group between ATP and AMP. Plays an important role in cellular energy homeostasis and in adenine nucleotide metabolism. The sequence is that of Adenylate kinase from Parabacteroides distasonis (strain ATCC 8503 / DSM 20701 / CIP 104284 / JCM 5825 / NCTC 11152).